The following is a 390-amino-acid chain: Lipid droplet-regulating VLDL assembly factor AUP1 homolog (390 aa).

Residues 1–32 (MASPEASSSGNTEDLRIEDLFHQKRNEDTIAK) lie on the Cytoplasmic side of the membrane. The stretch at 33-53 (IFSIIYAPVGLIILLIRVFLG) is an intramembrane region. The Cytoplasmic portion of the chain corresponds to 54 to 390 (FHTFIVACLL…NRQKYMNRDS (337 aa)). The CUE domain maps to 305–347 (QMDECAMRIKQSFPSFHLSAIRRDLEKTRSQTTTVNNLKAGKI).

It belongs to the AUP1 family.

It is found in the endoplasmic reticulum membrane. The protein localises to the lipid droplet. The sequence is that of Lipid droplet-regulating VLDL assembly factor AUP1 homolog from Caenorhabditis elegans.